We begin with the raw amino-acid sequence, 244 residues long: 3-deoxy-manno-octulosonate cytidylyltransferase (244 aa).

It belongs to the KdsB family.

It is found in the cytoplasm. The enzyme catalyses 3-deoxy-alpha-D-manno-oct-2-ulosonate + CTP = CMP-3-deoxy-beta-D-manno-octulosonate + diphosphate. The protein operates within nucleotide-sugar biosynthesis; CMP-3-deoxy-D-manno-octulosonate biosynthesis; CMP-3-deoxy-D-manno-octulosonate from 3-deoxy-D-manno-octulosonate and CTP: step 1/1. Its pathway is bacterial outer membrane biogenesis; lipopolysaccharide biosynthesis. Activates KDO (a required 8-carbon sugar) for incorporation into bacterial lipopolysaccharide in Gram-negative bacteria. The polypeptide is 3-deoxy-manno-octulosonate cytidylyltransferase (Rickettsia canadensis (strain McKiel)).